We begin with the raw amino-acid sequence, 381 residues long: MITVTEATATAGALQRLADQGVSVWLDDLSRRRIESGNLAELIRTKNVVGVTTNPSIFQAAIGSGEGYEEQLADLATRGVTVDEAVRMMTTADVRAAADVLRGVYDASGGRDGRVSIEVDPRLAHDTAATVAEARQLSWLVDRPNVMIKIPATKAGLPAITEVIGAGISVNVTLIFSLERYREVMDAYLAGLEKAQAAGIDLAGIHSVASFFVSRVDSEIDKRLSLLGTEEALGLRGRAALANARLAYEAYENVFAGDRFTALAGARANAQRPLWASTGVKDPAFRDTLYVEELVAPGTVNTMPEATLDAAADHGDVRGDTVTGGYAQARADLAAVERLGVSYDEVVEQLEQEGVAKFEAAWQELLAAVTKSLDSKGVDGE.

The Schiff-base intermediate with substrate role is filled by Lys149.

The protein belongs to the transaldolase family. Type 2 subfamily.

The protein localises to the cytoplasm. The catalysed reaction is D-sedoheptulose 7-phosphate + D-glyceraldehyde 3-phosphate = D-erythrose 4-phosphate + beta-D-fructose 6-phosphate. It participates in carbohydrate degradation; pentose phosphate pathway; D-glyceraldehyde 3-phosphate and beta-D-fructose 6-phosphate from D-ribose 5-phosphate and D-xylulose 5-phosphate (non-oxidative stage): step 2/3. In terms of biological role, transaldolase is important for the balance of metabolites in the pentose-phosphate pathway. The protein is Transaldolase 1 (tal1) of Streptomyces coelicolor (strain ATCC BAA-471 / A3(2) / M145).